The chain runs to 309 residues: MANQNSDLYKQITAGSVAAVFQTTMTYPFEYLKTGLQLQPKGTAFEIILPQIKSYFVGCSALNVAAFGKTILRFVTFDKLCHSLNNNIDNNDNFQRLTGYNLLIAGTLTGIVESLFIIPFENIKTTLIQSAMIDHKKLEKNQPVVNAKATFHKVATKSTPVARIEKLLPAVKHMYQTRGPAAFVQGTTATIFRQIANTSIQFTAYTAFKRLLQARNDKASSVITGLATSFTLVAMTQPIDVVKTRMMSQNAKTEYKNTLNCMYRIFVQEGMATFWKGSIFRFMKVGISGGLTFTVYEQVSLLLGFSSRS.

Solcar repeat units follow at residues 6 to 83 (SDLY…LCHS), 97 to 211 (LTGY…FKRL), and 216 to 302 (NDKA…VSLL). 6 helical membrane-spanning segments follow: residues 12-32 (ITAGSVAAVFQTTMTYPFEYL), 47-67 (IILPQIKSYFVGCSALNVAAF), 100-120 (YNLLIAGTLTGIVESLFIIPF), 184-204 (VQGTTATIFRQIANTSIQFTA), 222-242 (VITGLATSFTLVAMTQPIDVV), and 285-305 (VGISGGLTFTVYEQVSLLLGF).

Belongs to the mitochondrial carrier (TC 2.A.29) family.

Its subcellular location is the mitochondrion inner membrane. This is an uncharacterized protein from Saccharomyces cerevisiae (strain ATCC 204508 / S288c) (Baker's yeast).